Consider the following 141-residue polypeptide: MLMPKRTKWRKQQKGRNRGKSFRGNKIEFGDIAIKAVEAGRIDSRQIEAARITMTRKINRTGKTWIRVFPDKPLTAKPLETRMGKGKGAVDRWVMNIKPGRIIFEMAGVEEELARAALTLAIHKMPFKCKIITAKDSHELY.

Residues 1 to 23 (MLMPKRTKWRKQQKGRNRGKSFR) form a disordered region.

Belongs to the universal ribosomal protein uL16 family. In terms of assembly, part of the 50S ribosomal subunit.

Functionally, binds 23S rRNA and is also seen to make contacts with the A and possibly P site tRNAs. This Sulfurovum sp. (strain NBC37-1) protein is Large ribosomal subunit protein uL16.